The chain runs to 97 residues: Coiled-coil domain-containing protein 167 (97 aa).

Residues 10 to 79 (GVALEIDGLE…LRQENRKNML (70 aa)) are a coiled coil. Residues 78–95 (MLLSVAIFILLTLVYAYW) traverse the membrane as a helical segment.

It localises to the membrane. The polypeptide is Coiled-coil domain-containing protein 167 (CCDC167) (Homo sapiens (Human)).